We begin with the raw amino-acid sequence, 241 residues long: Large ribosomal subunit protein uL30 (241 aa).

A disordered region spans residues 1-32 (MATTLKPETLQKKEKAQQKTAEERAAAKKVRK). Residues 9 to 26 (TLQKKEKAQQKTAEERAA) show a composition bias toward basic and acidic residues.

Belongs to the universal ribosomal protein uL30 family. As to quaternary structure, component of the large ribosomal subunit. Mature ribosomes consist of a small (40S) and a large (60S) subunit. The 40S subunit contains about 32 different proteins and 1 molecule of RNA (18S). The 60S subunit contains 45 different proteins and 3 molecules of RNA (25S, 5.8S and 5S).

The protein localises to the cytoplasm. Component of the ribosome, a large ribonucleoprotein complex responsible for the synthesis of proteins in the cell. The small ribosomal subunit (SSU) binds messenger RNAs (mRNAs) and translates the encoded message by selecting cognate aminoacyl-transfer RNA (tRNA) molecules. The large subunit (LSU) contains the ribosomal catalytic site termed the peptidyl transferase center (PTC), which catalyzes the formation of peptide bonds, thereby polymerizing the amino acids delivered by tRNAs into a polypeptide chain. The nascent polypeptides leave the ribosome through a tunnel in the LSU and interact with protein factors that function in enzymatic processing, targeting, and the membrane insertion of nascent chains at the exit of the ribosomal tunnel. In Candida albicans (strain SC5314 / ATCC MYA-2876) (Yeast), this protein is Large ribosomal subunit protein uL30.